The sequence spans 799 residues: Protein translocase subunit SecA (799 aa).

Residues Gln85, 103–107 (GEGKT), and Asp504 each bind ATP.

Belongs to the SecA family. Monomer and homodimer. Part of the essential Sec protein translocation apparatus which comprises SecA, SecYEG and auxiliary proteins SecDF. Other proteins may also be involved.

It is found in the cell membrane. Its subcellular location is the cytoplasm. It catalyses the reaction ATP + H2O + cellular proteinSide 1 = ADP + phosphate + cellular proteinSide 2.. Part of the Sec protein translocase complex. Interacts with the SecYEG preprotein conducting channel. Has a central role in coupling the hydrolysis of ATP to the transfer of proteins into and across the cell membrane, serving as an ATP-driven molecular motor driving the stepwise translocation of polypeptide chains across the membrane. The sequence is that of Protein translocase subunit SecA from Lactobacillus gasseri (strain ATCC 33323 / DSM 20243 / BCRC 14619 / CIP 102991 / JCM 1131 / KCTC 3163 / NCIMB 11718 / NCTC 13722 / AM63).